The primary structure comprises 548 residues: Probable inorganic phosphate transporter 1-5 (548 aa).

At M1–A23 the chain is on the cytoplasmic side. The chain crosses the membrane as a helical span at residues V24–V44. Topologically, residues T45–S69 are extracellular. Residues A70 to L90 traverse the membrane as a helical segment. Residues G91–K98 lie on the Cytoplasmic side of the membrane. Residues V99–G119 form a helical membrane-spanning segment. Topologically, residues S120–K123 are extracellular. Residues G124–Y144 form a helical membrane-spanning segment. Topologically, residues P145–F163 are cytoplasmic. A helical transmembrane segment spans residues I164–I184. Topologically, residues V185–A210 are extracellular. The chain crosses the membrane as a helical span at residues D211–W231. The Cytoplasmic portion of the chain corresponds to R232–H303. A helical transmembrane segment spans residues L304–F324. The Extracellular segment spans residues Q325 to T355. The chain crosses the membrane as a helical span at residues L356–V376. Residues G377 to R378 are Cytoplasmic-facing. The helical transmembrane segment at F379–P399 threads the bilayer. At Y400–T405 the chain is on the extracellular side. Residues P406–G426 traverse the membrane as a helical segment. Residues P427–G449 lie on the Cytoplasmic side of the membrane. The chain crosses the membrane as a helical span at residues I450–A470. Over Q471 to N490 the chain is Extracellular. Residues S491 to E511 traverse the membrane as a helical segment. At S512 to E548 the chain is on the cytoplasmic side. Residues E518–E548 are disordered. Residues A533–E548 show a composition bias toward polar residues.

The protein belongs to the major facilitator superfamily. Phosphate:H(+) symporter (TC 2.A.1.9) family. As to expression, expressed at low levels in roots.

The protein resides in the membrane. High-affinity transporter for external inorganic phosphate. The protein is Probable inorganic phosphate transporter 1-5 (PHT1-5) of Oryza sativa subsp. japonica (Rice).